A 192-amino-acid polypeptide reads, in one-letter code: Ion-translocating oxidoreductase complex subunit A (192 aa).

6 helical membrane passes run 5 to 25 (LLLL…FLGL), 39 to 59 (IGMS…SYLV), 72 to 92 (LRTM…EMLV), 102 to 122 (ALGI…VALL), 134 to 154 (AIYG…FSAM), and 171 to 191 (AIAM…TGLV).

Belongs to the NqrDE/RnfAE family. As to quaternary structure, the complex is composed of six subunits: RnfA, RnfB, RnfC, RnfD, RnfE and RnfG.

The protein localises to the cell inner membrane. Part of a membrane-bound complex that couples electron transfer with translocation of ions across the membrane. This is Ion-translocating oxidoreductase complex subunit A from Shewanella loihica (strain ATCC BAA-1088 / PV-4).